A 534-amino-acid chain; its full sequence is MLSLLETKIIEPFMVVRQTLAPLRLSRWQIFKHMTRILIFSSNTRTIIFCVLMSLVGYIVSRIIWGRQEKYPDHGLPIVKTNDYHFDNIVAEGKRLYPNQAFMGINKRYKFVIYPSSSWEELKRIPEQTASIMDFQHVCNSGEWSLVGGETHELVKTITAELTRSLPARVPNRQQDAKMTFDTIIGHCPEEKGFNLLMTSLEIIAKINACTFVGRELGANKSWVTAVVYSPLWVYFAVTLCNATPDILRPLLRPLFFLPALRNYWNMQKLLKPKLDREMETFRQTDDKRKLLVPKSDQDLPFTHFLLSRYTEAAATIKQLVIDYIQVSYTSTPTTASALFHALWELAQHPEAAEVMRRELATVMIDGNLPKTHLQELKRMDSFLRESFRLHPITRFTLQRYVKEPFQLSDGSRIPPGVMAVVDAQEINRSPEIWENPDEFDMDRFYRLREISGNDNRYHFVTTSSNSPGWGDGTQACPGRFFATSTLKIVMAHIVMNYDVSLRKVAPLKSQPLVNGSYSPDDSVEIFFKSRNVE.

The chain crosses the membrane as a helical span at residues 46 to 66 (TIIFCVLMSLVGYIVSRIIWG). The N-linked (GlcNAc...) asparagine glycan is linked to Asn-220. Cys-477 contributes to the heme binding site. Asn-515 carries an N-linked (GlcNAc...) asparagine glycan.

Belongs to the cytochrome P450 family. The cofactor is heme.

It is found in the membrane. It functions in the pathway secondary metabolite biosynthesis. Cytochrome P450 monooxygenase; part of the gene cluster that mediates the biosynthesis of a tyrosine-derived cytochalasan acting as a fungal signal recognized by resistant rice plants and leads to avirulence in Pi33 resistant rice cultivars. The first step in the pathway is catalyzed by the hybrid PKS-NRPS ACE1, assisted by the enoyl reductase RAP1, that are responsible for fusion of the tyrosine precursor and the polyketide backbone. The polyketide synthase module (PKS) of ACE1 is responsible for the synthesis of the polyketide backbone and the downstream nonribosomal peptide synthetase (NRPS) amidates the carboxyl end of the polyketide with the tyrosine precursor. Because ACE1 lacks a designated enoylreductase (ER) domain, the required activity is provided the enoyl reductase RAP1. Reduction by the hydrolyase ORFZ, followed by dehydration and intra-molecular Diels-Alder cyclization by the Diels-Alderase ORF3 then yield the required isoindolone-fused macrocycle. A number of oxidative steps catalyzed by the tailoring enzymes identified within the cluster, including cytochrome P450 monooxygenases CYP1 to CYP4, the FAD-linked oxidoreductase OXR2 and the short-chain dehydrogenase/reductase OXR1, are further required to afford the final cytochalasans that confer avirulence and which have still to be identified. The monooxygenase CYP1 has been shown to be a site-selective C-18 hydroxylase whereas the function of CYP3 is the site-selective epoxidation of the C-6/C-7 olefin that is present in some intermediate compounds. Finally, SYN2 and RAP2 are not required for avirulence in Pi33 resistant rice cultivars. In Pyricularia oryzae (strain 70-15 / ATCC MYA-4617 / FGSC 8958) (Rice blast fungus), this protein is Cytochrome P450 monooxygenase CYP4.